The following is a 155-amino-acid chain: Endoribonuclease YbeY (155 aa).

3 residues coordinate Zn(2+): H120, H124, and H130.

It belongs to the endoribonuclease YbeY family. The cofactor is Zn(2+).

It localises to the cytoplasm. Single strand-specific metallo-endoribonuclease involved in late-stage 70S ribosome quality control and in maturation of the 3' terminus of the 16S rRNA. This chain is Endoribonuclease YbeY, found in Staphylococcus epidermidis (strain ATCC 12228 / FDA PCI 1200).